The sequence spans 126 residues: Protein translocase subunit SecE (126 aa).

3 helical membrane passes run 18–38 (LKWVATFVLLVAAVVGNYLYG), 40–60 (LSVVARAAGVIVLIAAALGVA), and 97–117 (IVLAVSIVMALALWGIDGIMV).

Belongs to the SecE/SEC61-gamma family. As to quaternary structure, component of the Sec protein translocase complex. Heterotrimer consisting of SecY, SecE and SecG subunits. The heterotrimers can form oligomers, although 1 heterotrimer is thought to be able to translocate proteins. Interacts with the ribosome. Interacts with SecDF, and other proteins may be involved. Interacts with SecA.

It is found in the cell inner membrane. Its function is as follows. Essential subunit of the Sec protein translocation channel SecYEG. Clamps together the 2 halves of SecY. May contact the channel plug during translocation. This chain is Protein translocase subunit SecE, found in Vibrio cholerae serotype O1 (strain ATCC 39315 / El Tor Inaba N16961).